Reading from the N-terminus, the 1657-residue chain is Thrombospondin type-1 domain-containing protein 7A (1657 aa).

The N-terminal stretch at 1–47 is a signal peptide; it reads MGLQARRWASGSRGAAGPRRGVLQLLPLPLPLPLLLLLLLRPGAGRA. Over 48–1607 the chain is Extracellular; it reads AAQGEAEAPT…FGPDGRLKTW (1560 aa). TSP type-1 domains follow at residues 57–116, 120–192, and 194–247; these read TLYL…KVCD, ELYD…IPCQ, and DCIV…SPCE. Asparagine 234 is a glycosylation site (N-linked (GlcNAc...) asparagine). The segment at 265–311 is disordered; that stretch reads MPHSRQVRQARRRGKNKEREKDRSKGVKDPEARELIKKKRNRNRQNR. The stretch at 267 to 315 forms a coiled coil; sequence HSRQVRQARRRGKNKEREKDRSKGVKDPEARELIKKKRNRNRQNRQENK. Residues 269 to 280 show a composition bias toward basic residues; the sequence is RQVRQARRRGKN. Basic and acidic residues predominate over residues 281-299; that stretch reads KEREKDRSKGVKDPEAREL. The segment covering 300–309 has biased composition (basic residues); the sequence is IKKKRNRNRQ. N-linked (GlcNAc...) asparagine glycosylation occurs at asparagine 332. 16 consecutive TSP type-1 domains span residues 360 to 416, 423 to 510, 512 to 574, 634 to 695, 696 to 769, 771 to 831, 832 to 904, 906 to 959, 960 to 1033, 1035 to 1095, 1096 to 1163, 1166 to 1220, 1221 to 1284, 1286 to 1341, 1342 to 1412, and 1414 to 1475; these read ECQV…LSQG, ATYG…IPCP, ECEV…PACY, DCVL…HPCT, VYHW…LPCK, DCIV…QACQ, SYRW…IPCQ, DCQL…CPCD, KYNA…IPCP, DCKL…SDCN, QYLW…LPCP, CVIS…KNCY, HYDY…VECP, NCQL…KPCY, RWQY…QPCP, and DCYL…GQCY. 3 disulfides stabilise this stretch: cysteine 435–cysteine 505, cysteine 455–cysteine 509, and cysteine 466–cysteine 494. Asparagine 450 carries N-linked (GlcNAc...) asparagine glycosylation. N-linked (GlcNAc...) asparagine glycosylation occurs at asparagine 500. 2 disulfides stabilise this stretch: cysteine 635-cysteine 677 and cysteine 646-cysteine 650. An N-linked (GlcNAc...) asparagine glycan is attached at asparagine 679. Cystine bridges form between cysteine 689–cysteine 694, cysteine 707–cysteine 764, cysteine 728–cysteine 768, cysteine 739–cysteine 752, cysteine 772–cysteine 814, cysteine 783–cysteine 787, and cysteine 824–cysteine 830. Asparagine 717 is a glycosylation site (N-linked (GlcNAc...) asparagine). The N-linked (GlcNAc...) asparagine glycan is linked to asparagine 968. Cystine bridges form between cysteine 972-cysteine 1028, cysteine 994-cysteine 1032, cysteine 1005-cysteine 1018, cysteine 1036-cysteine 1073, cysteine 1047-cysteine 1051, and cysteine 1090-cysteine 1094. N-linked (GlcNAc...) asparagine glycosylation occurs at asparagine 1043. Residue asparagine 1182 is glycosylated (N-linked (GlcNAc...) asparagine). A disulfide bridge links cysteine 1213 with cysteine 1219. Asparagine 1225 is a glycosylation site (N-linked (GlcNAc...) asparagine). 12 cysteine pairs are disulfide-bonded: cysteine 1232–cysteine 1279, cysteine 1240–cysteine 1283, cysteine 1251–cysteine 1264, cysteine 1287–cysteine 1325, cysteine 1298–cysteine 1302, cysteine 1335–cysteine 1340, cysteine 1351–cysteine 1407, cysteine 1358–cysteine 1411, cysteine 1369–cysteine 1388, cysteine 1415–cysteine 1459, cysteine 1426–cysteine 1430, and cysteine 1469–cysteine 1474. Asparagine 1276 is a glycosylation site (N-linked (GlcNAc...) asparagine). Asparagine 1366 carries an N-linked (GlcNAc...) asparagine glycan. Asparagine 1500 and asparagine 1547 each carry an N-linked (GlcNAc...) asparagine glycan. Residues 1570-1591 are disordered; it reads DVKTSRAVHPTQPSSNPAGRGR. A helical membrane pass occupies residues 1608–1628; the sequence is VYGVAAGAFVLLIFIVSMIYL. The Cytoplasmic portion of the chain corresponds to 1629 to 1657; it reads ACKKPKKPQRRQNNRLKPLTLAYDGDADM.

Proteolytic cleavage in the extracellular region generates a 210 kDa soluble form. In terms of processing, extensively N-glycosylated. As to expression, detected on kidney podocytes along the glomerular capillary wall (at protein level).

The protein localises to the cell membrane. It is found in the cell projection. It localises to the secreted. Its function is as follows. Plays a role in actin cytoskeleton rearrangement. Functionally, the soluble form promotes endothelial cell migration and filopodia formation during sprouting angiogenesis via a FAK-dependent mechanism. This chain is Thrombospondin type-1 domain-containing protein 7A (THSD7A), found in Homo sapiens (Human).